Here is an 815-residue protein sequence, read N- to C-terminus: Kinesin heavy chain (815 aa).

Positions 11 to 329 constitute a Kinesin motor domain; sequence GVQVFCRIRP…LLFGARAKTI (319 aa). 88–95 serves as a coordination point for ATP; the sequence is GQTSSGKT. Coiled-coil stretches lie at residues 335–374, 422–554, and 695–785; these read INEELTAEEWKRRYEKEKEKNTRLAALLQAAALELSRWRA, PITD…LDEC, and PAQK…RMNA. Positions 788-815 are disordered; it reads IVKPIRPGQVYTSPSAGMSQGAPNGSNA. The segment covering 797–815 has biased composition (polar residues); the sequence is VYTSPSAGMSQGAPNGSNA.

This sequence belongs to the TRAFAC class myosin-kinesin ATPase superfamily. Kinesin family. Kinesin subfamily. As to quaternary structure, oligomer composed of two heavy chains and two light chains.

It localises to the cytoplasm. Its subcellular location is the cytoskeleton. Functionally, microtubule-dependent motor protein required for organelle transport. Plays a role in endosome transport. Required for the transport of mitochondria along the axon of motor neurons. Involved in the nuclear migration of hyp7 hypodermal precursor cells. Required for the formation of dendritic branches of PVD sensory neurons. In non-ciliated neurons such as the PVD and PHC neurons, required for the organization of minus-end out microtubules in dendrites. Also required for the minus-end out orientation of microtubules in dendrites of AQR gas-sensing neurons. Involved in the localization of unc-33 to neurites. Positively regulates cilium position and dendrite morphogenesis in the postembryonic AQR and PQR gas-sensing neurons. Plays a more prominent role in regulating dendrite morphogenesis in AQR than in PQR neurons. Plays a role in regulating the localization of grdn-1 to the distal dendrites of AQR sensory neurons. The sequence is that of Kinesin heavy chain from Caenorhabditis elegans.